Reading from the N-terminus, the 456-residue chain is Methylenetetrahydrofolate--tRNA-(uracil-5-)-methyltransferase TrmFO (456 aa).

9-14 (GGGMAG) is a binding site for FAD.

The protein belongs to the MnmG family. TrmFO subfamily. The cofactor is FAD.

Its subcellular location is the cytoplasm. The enzyme catalyses uridine(54) in tRNA + (6R)-5,10-methylene-5,6,7,8-tetrahydrofolate + NADH + H(+) = 5-methyluridine(54) in tRNA + (6S)-5,6,7,8-tetrahydrofolate + NAD(+). It catalyses the reaction uridine(54) in tRNA + (6R)-5,10-methylene-5,6,7,8-tetrahydrofolate + NADPH + H(+) = 5-methyluridine(54) in tRNA + (6S)-5,6,7,8-tetrahydrofolate + NADP(+). Catalyzes the folate-dependent formation of 5-methyl-uridine at position 54 (M-5-U54) in all tRNAs. This Novosphingobium aromaticivorans (strain ATCC 700278 / DSM 12444 / CCUG 56034 / CIP 105152 / NBRC 16084 / F199) protein is Methylenetetrahydrofolate--tRNA-(uracil-5-)-methyltransferase TrmFO.